The sequence spans 118 residues: Large ribosomal subunit protein bL19 (118 aa).

It belongs to the bacterial ribosomal protein bL19 family.

Its function is as follows. This protein is located at the 30S-50S ribosomal subunit interface and may play a role in the structure and function of the aminoacyl-tRNA binding site. The polypeptide is Large ribosomal subunit protein bL19 (Geotalea uraniireducens (strain Rf4) (Geobacter uraniireducens)).